Reading from the N-terminus, the 434-residue chain is UPF0597 protein CLI_2075 (434 aa).

The protein belongs to the UPF0597 family.

The polypeptide is UPF0597 protein CLI_2075 (Clostridium botulinum (strain Langeland / NCTC 10281 / Type F)).